Here is a 204-residue protein sequence, read N- to C-terminus: Phosphopantothenoylcysteine decarboxylase (204 aa).

FMN-binding positions include Thr-53 and 104-107 (DANT). Residue Asn-140 participates in substrate binding. Catalysis depends on Cys-173, which acts as the Proton donor.

The protein belongs to the HFCD (homooligomeric flavin containing Cys decarboxylase) superfamily. In terms of assembly, homotrimer. FMN is required as a cofactor.

The enzyme catalyses N-[(R)-4-phosphopantothenoyl]-L-cysteine + H(+) = (R)-4'-phosphopantetheine + CO2. The protein operates within cofactor biosynthesis; coenzyme A biosynthesis; CoA from (R)-pantothenate: step 3/5. Its function is as follows. Catalyzes the decarboxylation of the cysteine moiety of 4-phosphopantothenoylcysteine to form 4'-phosphopantotheine and this reaction forms part of the biosynthesis of coenzyme A. This chain is Phosphopantothenoylcysteine decarboxylase (Ppcdc), found in Mus musculus (Mouse).